A 139-amino-acid chain; its full sequence is Putative pre-16S rRNA nuclease (139 aa).

This sequence belongs to the YqgF nuclease family.

The protein resides in the cytoplasm. In terms of biological role, could be a nuclease involved in processing of the 5'-end of pre-16S rRNA. This is Putative pre-16S rRNA nuclease from Streptococcus gordonii (strain Challis / ATCC 35105 / BCRC 15272 / CH1 / DL1 / V288).